A 354-amino-acid chain; its full sequence is Dihydroorotate dehydrogenase (quinone) (354 aa).

FMN is bound by residues 70–74 and Thr94; that span reads AGFDK. Lys74 is a substrate binding site. 119-123 is a substrate binding site; sequence NAMGF. 2 residues coordinate FMN: Asn148 and Asn181. Asn181 lines the substrate pocket. Ser184 serves as the catalytic Nucleophile. Residue Asn186 participates in substrate binding. Residues Lys217 and Thr245 each coordinate FMN. 246 to 247 contacts substrate; sequence NT. Residues Gly265, Gly294, and 315-316 each bind FMN; that span reads YS.

This sequence belongs to the dihydroorotate dehydrogenase family. Type 2 subfamily. Monomer. FMN is required as a cofactor.

Its subcellular location is the cell membrane. It catalyses the reaction (S)-dihydroorotate + a quinone = orotate + a quinol. The protein operates within pyrimidine metabolism; UMP biosynthesis via de novo pathway; orotate from (S)-dihydroorotate (quinone route): step 1/1. Functionally, catalyzes the conversion of dihydroorotate to orotate with quinone as electron acceptor. The polypeptide is Dihydroorotate dehydrogenase (quinone) (Sulfurovum sp. (strain NBC37-1)).